The chain runs to 447 residues: Drebrin-like protein A (447 aa).

The ADF-H domain occupies 2–133 (SVNLSKNGAA…EPESIMEKVA (132 aa)). Disordered regions lie at residues 141–160 (NFHKESKRGNEGPQGPVGSV) and 184–368 (KDEE…TENQ). Residues 180–245 (AKAEKDEEER…EQEETEKQQT (66 aa)) adopt a coiled-coil conformation. The span at 184 to 242 (KDEEERRMEENRRANSEKDRLERERKEREQREAETREQRFRERAKEIDAQRKEQEETEK) shows a compositional bias: basic and acidic residues. A compositionally biased stretch (polar residues) spans 246 to 255 (VPASQRSVNP). The span at 319–328 (PESPVPPVSH) shows a compositional bias: pro residues. Acidic residues predominate over residues 345 to 365 (QEEENIYQDATEDQNIYEDTT). One can recognise an SH3 domain in the interval 388–447 (EKGVCARALYDYQAADDTEISFDPDDLITQIQFIDEGWWRGFSPAGHFGMFPANYVELLE).

Belongs to the ABP1 family.

The protein resides in the cytoplasm. It localises to the cytoskeleton. Its subcellular location is the cell projection. It is found in the lamellipodium. The protein localises to the ruffle. The protein resides in the cell cortex. It localises to the cytosol. Its subcellular location is the synapse. It is found in the perikaryon. The protein localises to the neuron projection. The protein resides in the cell membrane. It localises to the cytoplasmic vesicle. Its subcellular location is the clathrin-coated vesicle membrane. It is found in the golgi apparatus membrane. The protein localises to the podosome. The protein resides in the early endosome. It localises to the dendrite. Its subcellular location is the postsynaptic density. Adapter protein that binds F-actin and dynamin, and thereby plays a role in receptor-mediated endocytosis. Plays a role in the reorganization of the actin cytoskeleton, formation of cell projections, such as neurites, in neuron morphogenesis and synapse formation. Does not bind G-actin and promote actin polymerization by itself, but excerts its functions by interaction with other proteins. Required for the formation of organized podosome rosettes. This chain is Drebrin-like protein A (dbnl-a), found in Xenopus laevis (African clawed frog).